The chain runs to 226 residues: Thiamine-phosphate synthase (226 aa).

Residues 46 to 50 (QFRDK) and D83 each bind 4-amino-2-methyl-5-(diphosphooxymethyl)pyrimidine. The Mg(2+) site is built by D84 and D103. S122 contributes to the 4-amino-2-methyl-5-(diphosphooxymethyl)pyrimidine binding site. 149-151 (TQS) serves as a coordination point for 2-[(2R,5Z)-2-carboxy-4-methylthiazol-5(2H)-ylidene]ethyl phosphate. K152 is a binding site for 4-amino-2-methyl-5-(diphosphooxymethyl)pyrimidine. 2-[(2R,5Z)-2-carboxy-4-methylthiazol-5(2H)-ylidene]ethyl phosphate is bound by residues G181 and 201–202 (IT).

It belongs to the thiamine-phosphate synthase family. The cofactor is Mg(2+).

It catalyses the reaction 2-[(2R,5Z)-2-carboxy-4-methylthiazol-5(2H)-ylidene]ethyl phosphate + 4-amino-2-methyl-5-(diphosphooxymethyl)pyrimidine + 2 H(+) = thiamine phosphate + CO2 + diphosphate. It carries out the reaction 2-(2-carboxy-4-methylthiazol-5-yl)ethyl phosphate + 4-amino-2-methyl-5-(diphosphooxymethyl)pyrimidine + 2 H(+) = thiamine phosphate + CO2 + diphosphate. The enzyme catalyses 4-methyl-5-(2-phosphooxyethyl)-thiazole + 4-amino-2-methyl-5-(diphosphooxymethyl)pyrimidine + H(+) = thiamine phosphate + diphosphate. It functions in the pathway cofactor biosynthesis; thiamine diphosphate biosynthesis; thiamine phosphate from 4-amino-2-methyl-5-diphosphomethylpyrimidine and 4-methyl-5-(2-phosphoethyl)-thiazole: step 1/1. Functionally, condenses 4-methyl-5-(beta-hydroxyethyl)thiazole monophosphate (THZ-P) and 2-methyl-4-amino-5-hydroxymethyl pyrimidine pyrophosphate (HMP-PP) to form thiamine monophosphate (TMP). This is Thiamine-phosphate synthase from Haemophilus influenzae (strain 86-028NP).